Reading from the N-terminus, the 500-residue chain is Probable malate:quinone oxidoreductase (500 aa).

This sequence belongs to the MQO family. FAD serves as cofactor.

It catalyses the reaction (S)-malate + a quinone = a quinol + oxaloacetate. It participates in carbohydrate metabolism; tricarboxylic acid cycle; oxaloacetate from (S)-malate (quinone route): step 1/1. The chain is Probable malate:quinone oxidoreductase from Bacillus mycoides (strain KBAB4) (Bacillus weihenstephanensis).